The primary structure comprises 498 residues: Cysteine--tRNA ligase (498 aa).

Cysteine 44 lines the Zn(2+) pocket. Residues 46–56 (PTVYSDAHLGH) carry the 'HIGH' region motif. 3 residues coordinate Zn(2+): cysteine 235, histidine 260, and glutamate 264. The 'KMSKS' region motif lies at 291-295 (KMSKS). An ATP-binding site is contributed by lysine 294.

This sequence belongs to the class-I aminoacyl-tRNA synthetase family. Monomer. Requires Zn(2+) as cofactor.

Its subcellular location is the cytoplasm. It carries out the reaction tRNA(Cys) + L-cysteine + ATP = L-cysteinyl-tRNA(Cys) + AMP + diphosphate. The polypeptide is Cysteine--tRNA ligase (cysS) (Deinococcus radiodurans (strain ATCC 13939 / DSM 20539 / JCM 16871 / CCUG 27074 / LMG 4051 / NBRC 15346 / NCIMB 9279 / VKM B-1422 / R1)).